The chain runs to 765 residues: Transcription factor RFX3 (765 aa).

The RFX-type winged-helix DNA-binding region spans 189–264 (HLQWLLDNYE…YHYYGIRVKP (76 aa)).

The protein belongs to the RFX family.

It is found in the nucleus. Functionally, transcription factor required for ciliogenesis and islet cell differentiation during endocrine pancreas development. The protein is Transcription factor RFX3 (rfx3) of Danio rerio (Zebrafish).